We begin with the raw amino-acid sequence, 63 residues long: Large ribosomal subunit protein bL28 (63 aa).

The protein belongs to the bacterial ribosomal protein bL28 family.

This Selenomonas ruminantium protein is Large ribosomal subunit protein bL28 (rpmB).